We begin with the raw amino-acid sequence, 159 residues long: Nucleoside diphosphate kinase (159 aa).

ATP is bound by residues K13, F61, R89, T95, R106, and N116. H119 serves as the catalytic Pros-phosphohistidine intermediate.

This sequence belongs to the NDK family. Mg(2+) serves as cofactor.

Its subcellular location is the cytoplasm. It catalyses the reaction a 2'-deoxyribonucleoside 5'-diphosphate + ATP = a 2'-deoxyribonucleoside 5'-triphosphate + ADP. It carries out the reaction a ribonucleoside 5'-diphosphate + ATP = a ribonucleoside 5'-triphosphate + ADP. In terms of biological role, major role in the synthesis of nucleoside triphosphates other than ATP. The ATP gamma phosphate is transferred to the NDP beta phosphate via a ping-pong mechanism, using a phosphorylated active-site intermediate. In Halorubrum lacusprofundi (strain ATCC 49239 / DSM 5036 / JCM 8891 / ACAM 34), this protein is Nucleoside diphosphate kinase.